The primary structure comprises 384 residues: Putative 8-amino-7-oxononanoate synthase (384 aa).

Residue Arg22 participates in substrate binding. 109 to 110 is a pyridoxal 5'-phosphate binding site; that stretch reads GY. His134 is a substrate binding site. Pyridoxal 5'-phosphate-binding positions include Ser182, 207–210, and 236–239; these read DDAH and TLSK. Lys239 is subject to N6-(pyridoxal phosphate)lysine. Thr348 serves as a coordination point for substrate.

Belongs to the class-II pyridoxal-phosphate-dependent aminotransferase family. BioF subfamily. Homodimer. It depends on pyridoxal 5'-phosphate as a cofactor.

The catalysed reaction is 6-carboxyhexanoyl-[ACP] + L-alanine + H(+) = (8S)-8-amino-7-oxononanoate + holo-[ACP] + CO2. Its pathway is cofactor biosynthesis; biotin biosynthesis. Functionally, catalyzes the decarboxylative condensation of pimeloyl-[acyl-carrier protein] and L-alanine to produce 8-amino-7-oxononanoate (AON), [acyl-carrier protein], and carbon dioxide. The polypeptide is Putative 8-amino-7-oxononanoate synthase (bioF) (Caulobacter vibrioides (strain ATCC 19089 / CIP 103742 / CB 15) (Caulobacter crescentus)).